The sequence spans 94 residues: Enhancer of yellow 2 transcription factor (94 aa).

Belongs to the ENY2 family. In terms of assembly, component of the nuclear pore complex (NPC)-associated AMEX complex (anchoring and mRNA export complex), composed of at least e(y)2 and xmas-2. Component of the SAGA transcription coactivator-HAT complexes, at least composed of Ada2b, e(y)2, Pcaf/Gcn5, Taf10 and Nipped-A/Trrap. Within the SAGA complex, e(y)2, Sgf11, and not/nonstop form an additional subcomplex of SAGA called the DUB module (deubiquitination module). Component of the THO complex, composed of at least e(y)2, HPR1, THO2, THOC5, THOC6 and THOC7. Interacts with e(y)1. Interacts with su(Hw) (via zinc fingers). Interacts with xmas-2; required for localization to the nuclear periphery. Interacts with the nuclear pore complex (NPC).

The protein resides in the nucleus. Its subcellular location is the nucleoplasm. The protein localises to the cytoplasm. Functionally, involved in mRNA export coupled transcription activation by association with both the AMEX and the SAGA complexes. The SAGA complex is a multiprotein complex that activates transcription by remodeling chromatin and mediating histone acetylation and deubiquitination. Within the SAGA complex, participates in a subcomplex that specifically deubiquitinates histone H2B. The SAGA complex is recruited to specific gene promoters by activators, where it is required for transcription. Required for nuclear receptor-mediated transactivation. Involved in transcription elongation by recruiting the THO complex onto nascent mRNA. The AMEX complex functions in docking export-competent ribonucleoprotein particles (mRNPs) to the nuclear entrance of the nuclear pore complex (nuclear basket). AMEX participates in mRNA export and accurate chromatin positioning in the nucleus by tethering genes to the nuclear periphery. This Drosophila mojavensis (Fruit fly) protein is Enhancer of yellow 2 transcription factor.